A 256-amino-acid chain; its full sequence is Protein Ta0487 (256 aa).

The protein belongs to the CinA family.

This Thermoplasma acidophilum (strain ATCC 25905 / DSM 1728 / JCM 9062 / NBRC 15155 / AMRC-C165) protein is Protein Ta0487.